Reading from the N-terminus, the 551-residue chain is Arginine--tRNA ligase (551 aa).

Positions 125–135 (ANPTGPLHIGH) match the 'HIGH' region motif.

The protein belongs to the class-I aminoacyl-tRNA synthetase family. Monomer.

It is found in the cytoplasm. It catalyses the reaction tRNA(Arg) + L-arginine + ATP = L-arginyl-tRNA(Arg) + AMP + diphosphate. This is Arginine--tRNA ligase from Oleidesulfovibrio alaskensis (strain ATCC BAA-1058 / DSM 17464 / G20) (Desulfovibrio alaskensis).